We begin with the raw amino-acid sequence, 555 residues long: Trehalase (555 aa).

Residues 1–16 form the signal peptide; the sequence is MIPFLLMVAFADTVLQ. Asn-46 carries N-linked (GlcNAc...) asparagine glycosylation. Residues Arg-164, 171–172, and Asn-208 each bind substrate; that span reads WD. N-linked (GlcNAc...) asparagine glycosylation occurs at Asn-216. Residues 217 to 219, 282 to 284, and Gly-316 contribute to the substrate site; these read RSQ and RPE. Asp-318 (proton donor/acceptor) is an active-site residue. Asn-334 and Asn-371 each carry an N-linked (GlcNAc...) asparagine glycan. The active-site Proton donor/acceptor is Glu-516. A substrate-binding site is contributed by Glu-531.

The protein belongs to the glycosyl hydrolase 37 family. Bean-shaped accessory glands (bags).

The protein resides in the secreted. It carries out the reaction alpha,alpha-trehalose + H2O = alpha-D-glucose + beta-D-glucose. The polypeptide is Trehalase (Tenebrio molitor (Yellow mealworm beetle)).